We begin with the raw amino-acid sequence, 337 residues long: MTLGIGVIGTGAIGQDHIRRVSRALSGGRIVALNDINADNARRAAQEWAPDAVICDTARDLVARPDVQAVMVTSWGGTHAEYVLDAIAAGKPVFCEKPLATNAADCLRIMEAEMARGRRLVQVGFNRRYDSGYLDLKAILDNGTIGDVLMVHAMHRNQRVGPNYKTEMAITDTLVHELDVHRWLLDGEYVSAQVIFPRRTSKALPHMRDPQIALLETKRGIRIDVEIFVNCQYGYDIQCAVVGELGQANLPDPPAVPVKTGETLSRHIMNDWKYRFIDAYDAEIQDFIDRASTGSPAGPDSWAGYAASVAADACVRAQESGRIEPIEMIAKPAFYSR.

It belongs to the Gfo/Idh/MocA family. In terms of assembly, homotetramer.

The enzyme catalyses myo-inositol + NAD(+) = scyllo-inosose + NADH + H(+). Functionally, involved in the oxidation of myo-inositol (MI) to 2-keto-myo-inositol (2KMI or 2-inosose). The polypeptide is Inositol 2-dehydrogenase (Gluconacetobacter diazotrophicus (strain ATCC 49037 / DSM 5601 / CCUG 37298 / CIP 103539 / LMG 7603 / PAl5)).